The sequence spans 490 residues: UDP-N-acetylmuramyl-tripeptide synthetase (490 aa).

113-119 (GTDGKTT) contributes to the ATP binding site. UDP-N-acetyl-alpha-D-muramoyl-L-alanyl-D-glutamate-binding positions include 158 to 159 (TT), Ser185, and Arg193. Residue Lys225 is modified to N6-carboxylysine.

The protein belongs to the MurCDEF family. MurE subfamily. Post-translationally, carboxylation is probably crucial for Mg(2+) binding and, consequently, for the gamma-phosphate positioning of ATP.

It localises to the cytoplasm. The protein operates within cell wall biogenesis; peptidoglycan biosynthesis. Functionally, catalyzes the addition of an amino acid to the nucleotide precursor UDP-N-acetylmuramoyl-L-alanyl-D-glutamate (UMAG) in the biosynthesis of bacterial cell-wall peptidoglycan. The sequence is that of UDP-N-acetylmuramyl-tripeptide synthetase from Deinococcus radiodurans (strain ATCC 13939 / DSM 20539 / JCM 16871 / CCUG 27074 / LMG 4051 / NBRC 15346 / NCIMB 9279 / VKM B-1422 / R1).